The chain runs to 248 residues: Tropomyosin alpha-4 chain (248 aa).

Alanine 2 carries the N-acetylalanine modification. Residues 2-248 adopt a coiled-coil conformation; it reads AGLNSLEAVK…DQTLDELNCI (247 aa). At serine 6 the chain carries Phosphoserine. The tract at residues 16–47 is disordered; that stretch reads ALQQQADEAEDRAQGLQRELDGERERREKAEG. Residues 33–47 show a composition bias toward basic and acidic residues; it reads RELDGERERREKAEG. 2 positions are modified to N6-acetyllysine: lysine 177 and lysine 215. Threonine 216 carries the post-translational modification Phosphothreonine.

The protein belongs to the tropomyosin family. Homodimer. Heterodimer of an alpha (TPM1, TPM3 or TPM4) and a beta (TPM2) chain.

It localises to the cytoplasm. Its subcellular location is the cytoskeleton. Its function is as follows. Binds to actin filaments in muscle and non-muscle cells. Plays a central role, in association with the troponin complex, in the calcium dependent regulation of vertebrate striated muscle contraction. Smooth muscle contraction is regulated by interaction with caldesmon. In non-muscle cells is implicated in stabilizing cytoskeleton actin filaments. Binds calcium. This is Tropomyosin alpha-4 chain (TPM4) from Equus caballus (Horse).